The chain runs to 237 residues: Glutathione S-transferase psoE (237 aa).

One can recognise a GST N-terminal domain in the interval 2–79 (VFGTLYTFPG…YITSQNEQTT (78 aa)). Glutathione is bound by residues Arg37, Lys49, Val50, Glu63, Cys64, and Asn99. Position 49 (Lys49) interacts with substrate. In terms of domain architecture, GST C-terminal spans 84-222 (DKKEYAEIIK…NNPPEKKPET (139 aa)). Gln108 lines the substrate pocket. Residues 208–222 (EPKLTNNPPEKKPET) are compositionally biased toward basic and acidic residues. The interval 208-237 (EPKLTNNPPEKKPETVPKNGAAVAIEATQA) is disordered.

It belongs to the GST superfamily. The cofactor is glutathione.

It participates in secondary metabolite biosynthesis. Glutathione S-transferase; part of the gene cluster that mediates the biosynthesis of pseurotin A, a competitive inhibitor of chitin synthase and an inducer of nerve-cell proliferation. The PKS-NRPS hybrid synthetase psoA is responsible for the biosynthesis of azaspirene, one of the first intermediates having the 1-oxa-7-azaspiro[4,4]-non-2-ene-4,6-dione core of pseurotin, via condensation of one acetyl-CoA, 4 malonyl-CoA, and a L-phenylalanine molecule. The dual-functional monooxygenase/methyltransferase psoF seems to be involved in the addition of the C3 methyl group onto the pseurotin scaffold. Azaspirene is then converted to synerazol through 4 steps including oxidation of C17 by the cytochrome P450 monooxygenase psoD, O-methylation of the hydroxy group of C8 by the methyltransferase psoC, and the trans-to-cis isomerization of the C13 olefin by the glutathione S-transferase psoE. The fourth step of synerazol production is performed by the dual-functional monooxygenase/methyltransferase psoF which seems to catalyze the epoxidation of the intermediate deepoxy-synerazol. Synerazol can be attacked by a water molecule nonenzymatically at two different positions to yield two diol products, pseurotin A and pseurotin D. This is Glutathione S-transferase psoE from Aspergillus fumigatus (strain ATCC MYA-4609 / CBS 101355 / FGSC A1100 / Af293) (Neosartorya fumigata).